The primary structure comprises 232 residues: 2,3,4,5-tetrahydropyridine-2,6-dicarboxylate N-acetyltransferase (232 aa).

Belongs to the transferase hexapeptide repeat family. DapH subfamily.

It catalyses the reaction (S)-2,3,4,5-tetrahydrodipicolinate + acetyl-CoA + H2O = L-2-acetamido-6-oxoheptanedioate + CoA. It participates in amino-acid biosynthesis; L-lysine biosynthesis via DAP pathway; LL-2,6-diaminopimelate from (S)-tetrahydrodipicolinate (acetylase route): step 1/3. Catalyzes the transfer of an acetyl group from acetyl-CoA to tetrahydrodipicolinate. The sequence is that of 2,3,4,5-tetrahydropyridine-2,6-dicarboxylate N-acetyltransferase from Streptococcus pneumoniae serotype 4 (strain ATCC BAA-334 / TIGR4).